A 406-amino-acid chain; its full sequence is 12S rRNA N(4)-cytidine methyltransferase METTL15 (406 aa).

The transit peptide at 1–22 (MLRYPYFYRTYNRLFSHFVDSG) directs the protein to the mitochondrion. S-adenosyl-L-methionine contacts are provided by residues 100 to 102 (GGH), Asp-119, Phe-146, Asp-169, and Gln-176. A Phosphoserine modification is found at Ser-358.

The protein belongs to the methyltransferase superfamily. RsmH family.

It is found in the mitochondrion matrix. It carries out the reaction cytidine(839) in 12S rRNA + S-adenosyl-L-methionine = N(4)-methylcytidine(839) in 12S rRNA + S-adenosyl-L-homocysteine + H(+). Functionally, N4-methylcytidine (m4C) methyltransferase responsible for the methylation of position C839 in mitochondrial 12S rRNA. Involved in the stabilization of 12S rRNA folding, therefore facilitating the assembly of the mitochondrial small ribosomal subunits. The chain is 12S rRNA N(4)-cytidine methyltransferase METTL15 from Mus musculus (Mouse).